Here is a 317-residue protein sequence, read N- to C-terminus: MNHLKTAILLAGLTALFMAVGFAIGGRGGMMIAFVVASATNLFSYWNSDKMVLRMYGAREVDETTAPDFVRMVHELARRADLPPPRVFIMDNPQPNAFATGRNPQNAAVAATTGLLQSLSPEEVAGVMAHELAHIKHYDTLTMTMTATIAGAISMLANFGLLFGGGNRNNNNPFGAIGTILMVILAPLAAMLVQMAISRSREYEADRGGAEILGRPMALASALAKISGAAHEVPNYEAESNPATAHMFIINPLSGARMDNLFSTHPAVENRIAALRALSQQMGGGGFAPGPAPAVRPPGGNPWGVDPGGGQRRGPWG.

Transmembrane regions (helical) follow at residues 6–26 and 28–48; these read TAILLAGLTALFMAVGFAIGG and GGMMIAFVVASATNLFSYWNS. Zn(2+) is bound at residue His-130. The active site involves Glu-131. His-134 provides a ligand contact to Zn(2+). Transmembrane regions (helical) follow at residues 145–165 and 173–193; these read MTATIAGAISMLANFGLLFGG and PFGAIGTILMVILAPLAAMLV. Residue Glu-202 coordinates Zn(2+). Residues 283–317 are disordered; sequence GGGGFAPGPAPAVRPPGGNPWGVDPGGGQRRGPWG. A compositionally biased stretch (pro residues) spans 290–300; that stretch reads GPAPAVRPPGG. A compositionally biased stretch (gly residues) spans 306-317; that stretch reads DPGGGQRRGPWG.

It belongs to the peptidase M48B family. The cofactor is Zn(2+).

It is found in the cell inner membrane. The polypeptide is Protease HtpX homolog (Xanthobacter autotrophicus (strain ATCC BAA-1158 / Py2)).